The following is an 85-amino-acid chain: YcgL domain-containing protein ECA2367 (85 aa).

The region spanning 1 to 85 (MFCVIYRSVK…PVESLLTTPV (85 aa)) is the YcgL domain.

This chain is YcgL domain-containing protein ECA2367, found in Pectobacterium atrosepticum (strain SCRI 1043 / ATCC BAA-672) (Erwinia carotovora subsp. atroseptica).